Consider the following 382-residue polypeptide: Putative acetyl-CoA C-acetyltransferase VraB (382 aa).

The active-site Acyl-thioester intermediate is the cysteine 86. Histidine 338 acts as the Proton acceptor in catalysis.

It belongs to the thiolase-like superfamily. Thiolase family.

The polypeptide is Putative acetyl-CoA C-acetyltransferase VraB (vraB) (Staphylococcus epidermidis (strain ATCC 12228 / FDA PCI 1200)).